Reading from the N-terminus, the 579-residue chain is V-type ATP synthase alpha chain (579 aa).

Position 227 to 234 (227 to 234) interacts with ATP; it reads GGFGTGKT.

Belongs to the ATPase alpha/beta chains family.

It carries out the reaction ATP + H2O + 4 H(+)(in) = ADP + phosphate + 5 H(+)(out). Produces ATP from ADP in the presence of a proton gradient across the membrane. The V-type alpha chain is a catalytic subunit. The sequence is that of V-type ATP synthase alpha chain from Anaeromyxobacter sp. (strain K).